The sequence spans 104 residues: Replication restart protein PriB (104 aa).

The region spanning 1 to 101 (MTNRLELSGI…LHAEQIELID (101 aa)) is the SSB domain.

Belongs to the PriB family. As to quaternary structure, homodimer. Interacts with DnaT. Interacts with PriA. Component of the replication restart primosome. Primosome assembly occurs via a 'hand-off' mechanism. PriA binds to replication forks, subsequently PriB then DnaT bind; DnaT then displaces ssDNA to generate the helicase loading substrate.

Its function is as follows. Involved in the restart of stalled replication forks, which reloads the replicative helicase on sites far from the origin of replication; the PriA-PriB pathway is the major replication restart pathway. During primosome assembly it facilitates complex formation between PriA and DnaT on DNA; stabilizes PriA on DNA. Stimulates the DNA unwinding activity of PriA helicase. Binds single-stranded (ss)DNA at the primosome assembly site (PAS). One study finds it binds 15 nucleotide (nt) ssDNA. Another study finds the minimal ssDNA length for binding to PriB is 25 nt; prefers dT(30) over dA(30). Also binds 22 nt dsDNA. The sequence is that of Replication restart protein PriB from Klebsiella pneumoniae subsp. pneumoniae (strain ATCC 700721 / MGH 78578).